The following is a 32-amino-acid chain: Photosystem II reaction center protein Z (32 aa).

Residues 9–29 (IIFSGSLIWVFLLIIVGFLNY) traverse the membrane as a helical segment.

Belongs to the PsbZ family. As to quaternary structure, PSII is composed of 1 copy each of membrane proteins PsbA, PsbB, PsbC, PsbD, PsbE, PsbF, PsbH, PsbI, PsbJ, PsbK, PsbL, PsbM, PsbT, PsbY, PsbZ, Psb30/Ycf12, at least 3 peripheral proteins of the oxygen-evolving complex and a large number of cofactors. It forms dimeric complexes.

The protein resides in the plastid. It localises to the chloroplast thylakoid membrane. In terms of biological role, may control the interaction of photosystem II (PSII) cores with the light-harvesting antenna, regulates electron flow through the 2 photosystem reaction centers. PSII is a light-driven water plastoquinone oxidoreductase, using light energy to abstract electrons from H(2)O, generating a proton gradient subsequently used for ATP formation. The chain is Photosystem II reaction center protein Z from Euglena myxocylindracea.